Here is a 293-residue protein sequence, read N- to C-terminus: Glycine--tRNA ligase alpha subunit (293 aa).

The protein belongs to the class-II aminoacyl-tRNA synthetase family. In terms of assembly, tetramer of two alpha and two beta subunits.

The protein resides in the cytoplasm. The enzyme catalyses tRNA(Gly) + glycine + ATP = glycyl-tRNA(Gly) + AMP + diphosphate. The chain is Glycine--tRNA ligase alpha subunit from Wolinella succinogenes (strain ATCC 29543 / DSM 1740 / CCUG 13145 / JCM 31913 / LMG 7466 / NCTC 11488 / FDC 602W) (Vibrio succinogenes).